A 253-amino-acid polypeptide reads, in one-letter code: Imidazole glycerol phosphate synthase subunit HisF (253 aa).

Residues Asp11 and Asp130 contribute to the active site.

It belongs to the HisA/HisF family. As to quaternary structure, heterodimer of HisH and HisF.

It localises to the cytoplasm. It catalyses the reaction 5-[(5-phospho-1-deoxy-D-ribulos-1-ylimino)methylamino]-1-(5-phospho-beta-D-ribosyl)imidazole-4-carboxamide + L-glutamine = D-erythro-1-(imidazol-4-yl)glycerol 3-phosphate + 5-amino-1-(5-phospho-beta-D-ribosyl)imidazole-4-carboxamide + L-glutamate + H(+). It functions in the pathway amino-acid biosynthesis; L-histidine biosynthesis; L-histidine from 5-phospho-alpha-D-ribose 1-diphosphate: step 5/9. IGPS catalyzes the conversion of PRFAR and glutamine to IGP, AICAR and glutamate. The HisF subunit catalyzes the cyclization activity that produces IGP and AICAR from PRFAR using the ammonia provided by the HisH subunit. This Clostridium botulinum (strain 657 / Type Ba4) protein is Imidazole glycerol phosphate synthase subunit HisF.